The sequence spans 402 residues: CCA-adding enzyme (402 aa).

Positions 32 and 35 each coordinate ATP. CTP is bound by residues G32 and R35. Mg(2+) contacts are provided by D45 and D47. Positions 119, 162, 165, 168, and 171 each coordinate ATP. CTP contacts are provided by R119, D162, R165, R168, and R171.

Belongs to the tRNA nucleotidyltransferase/poly(A) polymerase family. Bacterial CCA-adding enzyme type 3 subfamily. In terms of assembly, homodimer. The cofactor is Mg(2+).

The catalysed reaction is a tRNA precursor + 2 CTP + ATP = a tRNA with a 3' CCA end + 3 diphosphate. It catalyses the reaction a tRNA with a 3' CCA end + 2 CTP + ATP = a tRNA with a 3' CCACCA end + 3 diphosphate. In terms of biological role, catalyzes the addition and repair of the essential 3'-terminal CCA sequence in tRNAs without using a nucleic acid template. Adds these three nucleotides in the order of C, C, and A to the tRNA nucleotide-73, using CTP and ATP as substrates and producing inorganic pyrophosphate. tRNA 3'-terminal CCA addition is required both for tRNA processing and repair. Also involved in tRNA surveillance by mediating tandem CCA addition to generate a CCACCA at the 3' terminus of unstable tRNAs. While stable tRNAs receive only 3'-terminal CCA, unstable tRNAs are marked with CCACCA and rapidly degraded. The chain is CCA-adding enzyme from Lactococcus lactis subsp. cremoris (strain SK11).